We begin with the raw amino-acid sequence, 371 residues long: RxLR effector protein PITG_12731 (371 aa).

The N-terminal stretch at 1–24 (MRFYSVLLTIVTLIASTYDAKVNA) is a signal peptide. A RxLR-dEER motif is present at residues 43 to 53 (RMLRADHADER).

The protein belongs to the RxLR effector family.

It localises to the secreted. Its subcellular location is the host nucleus. It is found in the host cytoplasm. Its function is as follows. Effector that enhances P.infestans colonization of Nicotiana benthamiana leaves. This chain is RxLR effector protein PITG_12731, found in Phytophthora infestans (strain T30-4) (Potato late blight agent).